A 354-amino-acid chain; its full sequence is UDP-glucose 4-epimerase GEPI42 (354 aa).

Residue 11 to 42 participates in NAD(+) binding; sequence TILVTGGAGFIGSHTVVQLLKQGFHVSIIDNL. Substrate is bound at residue Ser-137. Residue Tyr-161 is the Proton acceptor of the active site.

The protein belongs to the NAD(P)-dependent epimerase/dehydratase family. Requires NAD(+) as cofactor.

The enzyme catalyses UDP-alpha-D-glucose = UDP-alpha-D-galactose. Its pathway is carbohydrate metabolism; galactose metabolism. The protein is UDP-glucose 4-epimerase GEPI42 of Cyamopsis tetragonoloba (Guar).